Reading from the N-terminus, the 117-residue chain is Non-specific lipid-transfer protein B (117 aa).

An N-terminal signal peptide occupies residues 1 to 25 (MAGLVKLSCLVLACMIVAGPIATNA). 4 disulfides stabilise this stretch: cysteine 29–cysteine 76, cysteine 39–cysteine 53, cysteine 54–cysteine 99, and cysteine 74–cysteine 113.

Belongs to the plant LTP family.

In terms of biological role, plant non-specific lipid-transfer proteins transfer phospholipids as well as galactolipids across membranes. May play a role in wax or cutin deposition in the cell walls of expanding epidermal cells and certain secretory tissues. This chain is Non-specific lipid-transfer protein B (WAX9B), found in Brassica oleracea var. italica (Broccoli).